A 288-amino-acid chain; its full sequence is Homoserine kinase (288 aa).

Pro79–Ser89 contributes to the ATP binding site.

It belongs to the GHMP kinase family. Homoserine kinase subfamily.

It localises to the cytoplasm. It catalyses the reaction L-homoserine + ATP = O-phospho-L-homoserine + ADP + H(+). Its pathway is amino-acid biosynthesis; L-threonine biosynthesis; L-threonine from L-aspartate: step 4/5. Its function is as follows. Catalyzes the ATP-dependent phosphorylation of L-homoserine to L-homoserine phosphate. This is Homoserine kinase from Streptococcus sanguinis (strain SK36).